The following is a 573-amino-acid chain: Protein FAM200A (573 aa).

Residues 1–51 form a disordered region; the sequence is MTPESRDTTDLSPGGTQEMEGIVIVKVEEEDEEDHFQKERNKVESSPQVLS. Topologically, residues 1-513 are extracellular; sequence MTPESRDTTD…DDFPLLSRKS (513 aa). The chain crosses the membrane as a helical span at residues 514–533; the sequence is ILLLLPFTTTYLCELGFSIL. The Cytoplasmic segment spans residues 534–573; the sequence is TRLKTKKRNRLNSAPDMRVALSSCVPDWKELMNRQAHPSH.

Belongs to the FAM200 family.

It localises to the membrane. The sequence is that of Protein FAM200A (FAM200A) from Homo sapiens (Human).